A 204-amino-acid polypeptide reads, in one-letter code: Acyl-homoserine-lactone synthase (204 aa).

Belongs to the autoinducer synthase family.

It catalyses the reaction a fatty acyl-[ACP] + S-adenosyl-L-methionine = an N-acyl-L-homoserine lactone + S-methyl-5'-thioadenosine + holo-[ACP] + H(+). Its function is as follows. Required for the synthesis of acyl-HSL autoinducers that bind to SolR. The polypeptide is Acyl-homoserine-lactone synthase (solI) (Ralstonia solanacearum (Pseudomonas solanacearum)).